We begin with the raw amino-acid sequence, 880 residues long: Valine--tRNA ligase (880 aa).

Positions 49–59 (PNVTGRLHLGH) match the 'HIGH' region motif. Residues 525–529 (KMSKS) carry the 'KMSKS' region motif. ATP is bound at residue K528. Residues 809 to 879 (LEGLINIDEE…AVQKRMAELK (71 aa)) adopt a coiled-coil conformation.

This sequence belongs to the class-I aminoacyl-tRNA synthetase family. ValS type 1 subfamily. As to quaternary structure, monomer.

It localises to the cytoplasm. The catalysed reaction is tRNA(Val) + L-valine + ATP = L-valyl-tRNA(Val) + AMP + diphosphate. As ValRS can inadvertently accommodate and process structurally similar amino acids such as threonine, to avoid such errors, it has a 'posttransfer' editing activity that hydrolyzes mischarged Thr-tRNA(Val) in a tRNA-dependent manner. Catalyzes the attachment of valine to tRNA(Val). In Bacillus subtilis (strain 168), this protein is Valine--tRNA ligase.